Here is a 518-residue protein sequence, read N- to C-terminus: Xylose import ATP-binding protein XylG (518 aa).

ABC transporter domains follow at residues 6–245 and 262–507; these read LQMN…VGRE and FEAR…LSHS. 38–45 is an ATP binding site; that stretch reads GENGAGKS.

This sequence belongs to the ABC transporter superfamily. Xylose importer (TC 3.A.1.2.4) family. In terms of assembly, the complex is composed of two ATP-binding proteins (XylG), two transmembrane proteins (XylH) and a solute-binding protein (XylF).

The protein resides in the cell inner membrane. The enzyme catalyses D-xylose(out) + ATP + H2O = D-xylose(in) + ADP + phosphate + H(+). In terms of biological role, part of the ABC transporter complex XylFGH involved in xylose import. Responsible for energy coupling to the transport system. The chain is Xylose import ATP-binding protein XylG from Pseudomonas syringae pv. syringae (strain B728a).